A 135-amino-acid polypeptide reads, in one-letter code: Transcriptional activator protein (135 aa).

The Nuclear localization signal signature appears at 17–32 (KIQHHIAKKRQVRRRR). The segment at 37 to 54 (CGCSYYIHLDCINHGFTH) is a zinc-finger region. A transactivation region spans residues 120 to 135 (HLDDLTVSDWSFFKSL).

It belongs to the geminiviridae transcriptional activator protein family. Monomer. Homodimer. Homooligomer. Self-interaction correlates with nuclear localization and efficient activation of transcription. Monomers suppress local silencing by interacting with and inactivating host adenosine kinase 2 (ADK2) in the cytoplasm. Interacts with and inhibits host SNF1 kinase. Binds to ssDNA. Post-translationally, phosphorylated.

It is found in the host nucleus. The protein resides in the host cytoplasm. Strong activator of the late viral genes promoters. Acts as a suppressor of RNA-mediated gene silencing, also known as post-transcriptional gene silencing (PTGS), a mechanism of plant viral defense that limits the accumulation of viral RNAs. TrAP suppresses the host RNA silencing by inhibiting adenosine kinase 2 (ADK2), a kinase involved in a general methylation pathway. Also suppresses the host basal defense by interacting with and inhibiting SNF1 kinase, a key regulator of cell metabolism implicated in innate antiviral defense. Determines pathogenicity. The sequence is that of Transcriptional activator protein from Tomato yellow leaf curl Sardinia virus (isolate Spain-2) (TYLCSV).